Consider the following 376-residue polypeptide: DNA methyltransferase CcrM (376 aa).

The RAMA domain occupies 273 to 370; that stretch reads KATLSVMTGK…IDELRSVIRN (98 aa).

This sequence belongs to the N(4)/N(6)-methyltransferase family.

It catalyses the reaction a 2'-deoxyadenosine in DNA + S-adenosyl-L-methionine = an N(6)-methyl-2'-deoxyadenosine in DNA + S-adenosyl-L-homocysteine + H(+). Its function is as follows. A beta subtype methylase that recognizes the double-stranded sequence 5'-GANTC-3' and methylates A-2 on both strands. Overexpression leads to many branched and bloated cells, two to three times the size of wild-type cells, and cells that have 1-3 times the normal amount of DNA. Contributes to the accurate cell-cycle control of DNA replication and cellular morphology. Can fully replace its ortholog in C.crescentus. The polypeptide is DNA methyltransferase CcrM (smeIM) (Rhizobium meliloti (strain 1021) (Ensifer meliloti)).